A 233-amino-acid polypeptide reads, in one-letter code: Outer membrane protein MIP (233 aa).

A signal peptide spans 1 to 20 (MKMKLVTAAIMGLAMSTAMA). The 90-residue stretch at 144-233 (SDTVTVEYTG…IHLISVKKAA (90 aa)) folds into the PPIase FKBP-type domain.

It belongs to the FKBP-type PPIase family.

The protein resides in the cell outer membrane. It carries out the reaction [protein]-peptidylproline (omega=180) = [protein]-peptidylproline (omega=0). Strongly inhibited by FK506 but is completely resistant to cyclosporin A. Essential virulence factor associated with macrophage infectivity. Exhibits PPIase activity. This chain is Outer membrane protein MIP (mip), found in Legionella longbeachae.